Consider the following 369-residue polypeptide: uncharacterized protein (369 aa).

Position 184 is an N6-(pyridoxal phosphate)lysine (Lys-184).

This sequence belongs to the class-V pyridoxal-phosphate-dependent aminotransferase family. Pyridoxal 5'-phosphate serves as cofactor.

This is an uncharacterized protein from Helicobacter pylori (strain ATCC 700392 / 26695) (Campylobacter pylori).